The sequence spans 514 residues: MRLEVFCEDRLGLTRELLDLLVLRSIDLRGIEIDPIGRIYLNFAELEFTNFSSLMAEIRRISGVTDVRTVPWMPSEREHLALSALLEALPEPVLSLDMKSKIEMANPASCQLFAHTQDRMRNHTAAQLINGFNFQRWLESNPQDSHSEHVVINGQNFLMEITPVHLQGENQEQMLTGAVVMLRSTIRMGRQLQNMTTQDLSAFSQIIAVSAKMKHVVEQARKLATLSAPLLITGNTGTGKDLFAHACHLASPRASKPYLALNCASIPEDAVESELFGHAPEGKKGFFEQANGGSVLLDEIGEMSPRMQTKLLRFLNDGTFRRVGEDHEVHVDVRVICATQKNLVEMVQKGLFREDLYYRLNVLTLNLPPLRDLPADIMPLTELFVARFADEQGVPRPKLSADLSTVLTRYGWPGNVRHVKNAIYRALTQLEGYELRPQDILLPDYDAATVAVGEEVMEGSLDEITSRFERSVLTQLYMNYPSTRKLAKRLGVSHTAIANKLREYGLSQQKKSEE.

The 71-residue stretch at 2 to 72 (RLEVFCEDRL…GVTDVRTVPW (71 aa)) folds into the ACT domain. Residues 78–120 (EHLALSALLEALPEPVLSLDMKSKIEMANPASCQLFAHTQDRM) enclose the PAS domain. In terms of domain architecture, Sigma-54 factor interaction spans 206-428 (IIAVSAKMKH…VKNAIYRALT (223 aa)). Residues 234–241 (GNTGTGKD) and 290–299 (ANGGSVLLDE) contribute to the ATP site. The H-T-H motif DNA-binding region spans 482-502 (STRKLAKRLGVSHTAIANKLR).

In terms of assembly, homodimer. In presence of tyrosine (or high concentrations of phenylalanine or tryptophan) and ATP, it self-associates to form an hexamer.

Its subcellular location is the cytoplasm. Its function is as follows. Dual transcriptional regulator of the TyrR regulon, which includes a number of genes coding for proteins involved in the biosynthesis or transport of the three aromatic amino acids, phenylalanine, tyrosine and tryptophan. These three aromatic amino acids act as effectors which bind to the TyrR protein to form an active regulatory protein. Acts by binding specifically to TyrR boxes in the promoter region of the target genes. This Citrobacter braakii protein is HTH-type transcriptional regulatory protein TyrR.